A 301-amino-acid polypeptide reads, in one-letter code: Protoheme IX farnesyltransferase (301 aa).

A run of 9 helical transmembrane segments spans residues 20–42, 55–75, 105–125, 126–146, 150–172, 176–198, 227–247, 249–269, and 280–300; these read FTEL…GMWL, VDVI…SGAF, ALMV…MTTW, QAGV…SLYA, LVSN…WFAV, FSIV…FYAI, MFFW…LGIV, VILA…GFKM, and FVYS…ISIF.

Belongs to the UbiA prenyltransferase family. Protoheme IX farnesyltransferase subfamily. Interacts with CtaA.

The protein resides in the cell membrane. The enzyme catalyses heme b + (2E,6E)-farnesyl diphosphate + H2O = Fe(II)-heme o + diphosphate. The protein operates within porphyrin-containing compound metabolism; heme O biosynthesis; heme O from protoheme: step 1/1. In terms of biological role, converts heme B (protoheme IX) to heme O by substitution of the vinyl group on carbon 2 of heme B porphyrin ring with a hydroxyethyl farnesyl side group. The chain is Protoheme IX farnesyltransferase from Listeria monocytogenes serovar 1/2a (strain ATCC BAA-679 / EGD-e).